A 446-amino-acid polypeptide reads, in one-letter code: Signal recognition particle protein (446 aa).

Residues 108 to 115 (GLQGAGKT), 191 to 195 (DTAGR), and 249 to 252 (TKLD) each bind GTP.

This sequence belongs to the GTP-binding SRP family. SRP54 subfamily. As to quaternary structure, part of the signal recognition particle protein translocation system, which is composed of SRP and FtsY. Interacts with a small cytoplasmic RNA (sc-RNA).

Its subcellular location is the cytoplasm. The enzyme catalyses GTP + H2O = GDP + phosphate + H(+). Functionally, involved in targeting and insertion of nascent membrane proteins into the cytoplasmic membrane. Binds to the hydrophobic signal sequence of the ribosome-nascent chain (RNC) as it emerges from the ribosomes. The SRP-RNC complex is then targeted to the cytoplasmic membrane where it interacts with the SRP receptor FtsY. Interaction with FtsY leads to the transfer of the RNC complex to the Sec translocase for insertion into the membrane, the hydrolysis of GTP by both Ffh and FtsY, and the dissociation of the SRP-FtsY complex into the individual components. This is Signal recognition particle protein from Bacillus subtilis (strain 168).